The sequence spans 2388 residues: Highly reducing polyketide synthase Preu1 (2388 aa).

One can recognise a Ketosynthase family 3 (KS3) domain in the interval 7-432 (NDDIAIVGLA…GTNAHVILDD (426 aa)). Residues Cys180, His315, and His355 each act as for beta-ketoacyl synthase activity in the active site. A malonyl-CoA:ACP transacylase (MAT) domain region spans residues 549–875 (GFVFTGQGAQ…SSVLMRGEDG (327 aa)). The active-site For malonyltransferase activity is the Ser641. Residues 940 to 1074 (HDLLGAPTQD…GLGKIHYRPE (135 aa)) are N-terminal hotdog fold. One can recognise a PKS/mFAS DH domain in the interval 940 to 1256 (HDLLGAPTQD…CRELPNGNSQ (317 aa)). A dehydratase (DH) domain region spans residues 941-1251 (DLLGAPTQDS…VEGLRCRELP (311 aa)). The Proton acceptor; for dehydratase activity role is filled by His972. A C-terminal hotdog fold region spans residues 1102–1256 (TASISPVDFY…CRELPNGNSQ (155 aa)). Asp1167 (proton donor; for dehydratase activity) is an active-site residue. The tract at residues 1676 to 1983 (KLPSDARFTS…VPTGLGKAVL (308 aa)) is enoyl reductase (ER) domain. The ketoreductase (KR) domain stretch occupies residues 2007-2191 (ATYVLAGGLG…AATSVDLGLM (185 aa)). In terms of domain architecture, Carrier spans 2303-2380 (QANGIVLEAL…ALAEKISKAS (78 aa)). O-(pantetheine 4'-phosphoryl)serine is present on Ser2340.

It depends on pantetheine 4'-phosphate as a cofactor.

In terms of biological role, highly reducing polyketide synthase; part of a gene cluster that mediates the biosynthesis of a yet unidentified natural product. The chain is Highly reducing polyketide synthase Preu1 from Preussia isomera (Coprophilous fungus).